A 277-amino-acid polypeptide reads, in one-letter code: Shikimate dehydrogenase (NADP(+)) (277 aa).

Shikimate is bound by residues 19-21 (SKS) and T66. Catalysis depends on K70, which acts as the Proton acceptor. D82 lines the NADP(+) pocket. Positions 91 and 107 each coordinate shikimate. Residues 133–137 (GAGGA), 157–162 (NRTRAR), and L222 contribute to the NADP(+) site. Residue Y224 coordinates shikimate. Residue G245 coordinates NADP(+).

The protein belongs to the shikimate dehydrogenase family. In terms of assembly, homodimer.

The enzyme catalyses shikimate + NADP(+) = 3-dehydroshikimate + NADPH + H(+). It functions in the pathway metabolic intermediate biosynthesis; chorismate biosynthesis; chorismate from D-erythrose 4-phosphate and phosphoenolpyruvate: step 4/7. Its function is as follows. Involved in the biosynthesis of the chorismate, which leads to the biosynthesis of aromatic amino acids. Catalyzes the reversible NADPH linked reduction of 3-dehydroshikimate (DHSA) to yield shikimate (SA). This is Shikimate dehydrogenase (NADP(+)) from Roseobacter denitrificans (strain ATCC 33942 / OCh 114) (Erythrobacter sp. (strain OCh 114)).